The chain runs to 498 residues: Phenylalanine--tRNA ligase alpha subunit (498 aa).

Residues Thr328, 372-374, and Tyr412 contribute to the L-phenylalanine site; that span reads QVE. Glu414 is a binding site for Mg(2+). L-phenylalanine is bound at residue Phe438.

The protein belongs to the class-II aminoacyl-tRNA synthetase family. Phe-tRNA synthetase alpha subunit type 2 subfamily. As to quaternary structure, tetramer of two alpha and two beta subunits. It depends on Mg(2+) as a cofactor.

It is found in the cytoplasm. The enzyme catalyses tRNA(Phe) + L-phenylalanine + ATP = L-phenylalanyl-tRNA(Phe) + AMP + diphosphate + H(+). In Drosophila melanogaster (Fruit fly), this protein is Phenylalanine--tRNA ligase alpha subunit.